A 157-amino-acid polypeptide reads, in one-letter code: S-ribosylhomocysteine lyase (157 aa).

Positions 54, 58, and 126 each coordinate Fe cation.

It belongs to the LuxS family. As to quaternary structure, homodimer. Fe cation is required as a cofactor.

It catalyses the reaction S-(5-deoxy-D-ribos-5-yl)-L-homocysteine = (S)-4,5-dihydroxypentane-2,3-dione + L-homocysteine. Involved in the synthesis of autoinducer 2 (AI-2) which is secreted by bacteria and is used to communicate both the cell density and the metabolic potential of the environment. The regulation of gene expression in response to changes in cell density is called quorum sensing. Catalyzes the transformation of S-ribosylhomocysteine (RHC) to homocysteine (HC) and 4,5-dihydroxy-2,3-pentadione (DPD). In Bacillus anthracis (strain A0248), this protein is S-ribosylhomocysteine lyase.